The primary structure comprises 165 residues: Lipoprotein signal peptidase (165 aa).

3 helical membrane-spanning segments follow: residues 9–29, 69–89, and 98–118; these read FLAISFFVLIDWVSKLAVLLY, KYFLFAIRIAIILGILAFLFL, and IRFSLILLCSGAIGNVGDILF. Residues aspartate 124 and aspartate 142 contribute to the active site. Residues 133–153 form a helical membrane-spanning segment; the sequence is WYFPTFNFADIFISLGTFIFV.

This sequence belongs to the peptidase A8 family.

Its subcellular location is the cell inner membrane. The catalysed reaction is Release of signal peptides from bacterial membrane prolipoproteins. Hydrolyzes -Xaa-Yaa-Zaa-|-(S,diacylglyceryl)Cys-, in which Xaa is hydrophobic (preferably Leu), and Yaa (Ala or Ser) and Zaa (Gly or Ala) have small, neutral side chains.. The protein operates within protein modification; lipoprotein biosynthesis (signal peptide cleavage). This protein specifically catalyzes the removal of signal peptides from prolipoproteins. This chain is Lipoprotein signal peptidase, found in Chlamydia caviae (strain ATCC VR-813 / DSM 19441 / 03DC25 / GPIC) (Chlamydophila caviae).